Reading from the N-terminus, the 264-residue chain is 3-methyl-2-oxobutanoate hydroxymethyltransferase (264 aa).

The Mg(2+) site is built by D45 and D84. 3-methyl-2-oxobutanoate contacts are provided by residues 45-46 (DS), D84, and K112. E114 is a Mg(2+) binding site. Residue E181 is the Proton acceptor of the active site.

Belongs to the PanB family. As to quaternary structure, homodecamer; pentamer of dimers. It depends on Mg(2+) as a cofactor.

The protein localises to the cytoplasm. It carries out the reaction 3-methyl-2-oxobutanoate + (6R)-5,10-methylene-5,6,7,8-tetrahydrofolate + H2O = 2-dehydropantoate + (6S)-5,6,7,8-tetrahydrofolate. Its pathway is cofactor biosynthesis; (R)-pantothenate biosynthesis; (R)-pantoate from 3-methyl-2-oxobutanoate: step 1/2. Functionally, catalyzes the reversible reaction in which hydroxymethyl group from 5,10-methylenetetrahydrofolate is transferred onto alpha-ketoisovalerate to form ketopantoate. The chain is 3-methyl-2-oxobutanoate hydroxymethyltransferase from Escherichia coli (strain 55989 / EAEC).